The sequence spans 205 residues: Glycerol-3-phosphate acyltransferase (205 aa).

6 helical membrane passes run 5 to 25, 54 to 74, 87 to 107, 117 to 137, 138 to 158, and 162 to 182; these read LALGIWAASYLAGSLPAGYLA, GPAAAVLLFDVFKGLFAVWLA, IVLGAGLAAIVGHSWPVWLAF, VGLLLGMHWPVALTVAAVWGV, CFAVTRIVSFASIVAAAATPL, and LWRAPLPFTLFGLLGGIYIVW.

Belongs to the PlsY family. Probably interacts with PlsX.

The protein resides in the cell inner membrane. It carries out the reaction an acyl phosphate + sn-glycerol 3-phosphate = a 1-acyl-sn-glycero-3-phosphate + phosphate. It functions in the pathway lipid metabolism; phospholipid metabolism. In terms of biological role, catalyzes the transfer of an acyl group from acyl-phosphate (acyl-PO(4)) to glycerol-3-phosphate (G3P) to form lysophosphatidic acid (LPA). This enzyme utilizes acyl-phosphate as fatty acyl donor, but not acyl-CoA or acyl-ACP. This Gloeobacter violaceus (strain ATCC 29082 / PCC 7421) protein is Glycerol-3-phosphate acyltransferase.